The sequence spans 182 residues: Ribosome maturation factor RimM (182 aa).

Residues 106–179 form the PRC barrel domain; that stretch reads EGEFHVLDLI…RIEITPPPGL (74 aa).

Belongs to the RimM family. Binds ribosomal protein uS19.

It is found in the cytoplasm. An accessory protein needed during the final step in the assembly of 30S ribosomal subunit, possibly for assembly of the head region. Essential for efficient processing of 16S rRNA. May be needed both before and after RbfA during the maturation of 16S rRNA. It has affinity for free ribosomal 30S subunits but not for 70S ribosomes. The polypeptide is Ribosome maturation factor RimM (Synechococcus elongatus (strain ATCC 33912 / PCC 7942 / FACHB-805) (Anacystis nidulans R2)).